Consider the following 208-residue polypeptide: FMN-dependent NADH:quinone oxidoreductase 1 (208 aa).

The protein belongs to the azoreductase type 1 family. Homodimer. It depends on FMN as a cofactor.

It catalyses the reaction 2 a quinone + NADH + H(+) = 2 a 1,4-benzosemiquinone + NAD(+). The catalysed reaction is N,N-dimethyl-1,4-phenylenediamine + anthranilate + 2 NAD(+) = 2-(4-dimethylaminophenyl)diazenylbenzoate + 2 NADH + 2 H(+). In terms of biological role, quinone reductase that provides resistance to thiol-specific stress caused by electrophilic quinones. Its function is as follows. Also exhibits azoreductase activity. Catalyzes the reductive cleavage of the azo bond in aromatic azo compounds to the corresponding amines. The polypeptide is FMN-dependent NADH:quinone oxidoreductase 1 (Bacillus cereus (strain ATCC 14579 / DSM 31 / CCUG 7414 / JCM 2152 / NBRC 15305 / NCIMB 9373 / NCTC 2599 / NRRL B-3711)).